The chain runs to 344 residues: Holliday junction branch migration complex subunit RuvB (344 aa).

The tract at residues 1–185 (MSTSRSDALK…FGIDFRYDYY (185 aa)) is large ATPase domain (RuvB-L). ATP-binding positions include Leu24, Arg25, Gly66, Lys69, Thr70, Thr71, 132–134 (EDY), Arg175, Tyr185, and Arg222. Residue Thr70 coordinates Mg(2+). The small ATPAse domain (RuvB-S) stretch occupies residues 186–256 (TADLLQEITQ…IADRALNALD (71 aa)). Residues 259 to 344 (EEGLDDMDAR…AADQDLFDQE (86 aa)) form a head domain (RuvB-H) region. Arg314 and Arg319 together coordinate DNA.

This sequence belongs to the RuvB family. As to quaternary structure, homohexamer. Forms an RuvA(8)-RuvB(12)-Holliday junction (HJ) complex. HJ DNA is sandwiched between 2 RuvA tetramers; dsDNA enters through RuvA and exits via RuvB. An RuvB hexamer assembles on each DNA strand where it exits the tetramer. Each RuvB hexamer is contacted by two RuvA subunits (via domain III) on 2 adjacent RuvB subunits; this complex drives branch migration. In the full resolvosome a probable DNA-RuvA(4)-RuvB(12)-RuvC(2) complex forms which resolves the HJ.

The protein resides in the cytoplasm. The enzyme catalyses ATP + H2O = ADP + phosphate + H(+). Functionally, the RuvA-RuvB-RuvC complex processes Holliday junction (HJ) DNA during genetic recombination and DNA repair, while the RuvA-RuvB complex plays an important role in the rescue of blocked DNA replication forks via replication fork reversal (RFR). RuvA specifically binds to HJ cruciform DNA, conferring on it an open structure. The RuvB hexamer acts as an ATP-dependent pump, pulling dsDNA into and through the RuvAB complex. RuvB forms 2 homohexamers on either side of HJ DNA bound by 1 or 2 RuvA tetramers; 4 subunits per hexamer contact DNA at a time. Coordinated motions by a converter formed by DNA-disengaged RuvB subunits stimulates ATP hydrolysis and nucleotide exchange. Immobilization of the converter enables RuvB to convert the ATP-contained energy into a lever motion, pulling 2 nucleotides of DNA out of the RuvA tetramer per ATP hydrolyzed, thus driving DNA branch migration. The RuvB motors rotate together with the DNA substrate, which together with the progressing nucleotide cycle form the mechanistic basis for DNA recombination by continuous HJ branch migration. Branch migration allows RuvC to scan DNA until it finds its consensus sequence, where it cleaves and resolves cruciform DNA. This chain is Holliday junction branch migration complex subunit RuvB, found in Salinibacter ruber (strain DSM 13855 / M31).